The following is a 206-amino-acid chain: MPSLLITVLFLNVIIYVVNTVGAATVDGLLWLLYIQLPTGTSQIAREQRHMKREVVQLKHEMSSTSSQDEFAKWAKLRRRHDKALEAYEAKNNELTQSKSTFDMTIKIARWAATSGLMLFLQFWYSKTPIFTLPPGWIPWQVQWVLSFPRAPMGTVSIQIWGGACATVVALVGDAMKASLAYVSKPKIDRIKLGATMEGKEGKKRQ.

The Lumenal segment spans residues 1–4; it reads MPSL. The chain crosses the membrane as a helical span at residues 5–24; sequence LITVLFLNVIIYVVNTVGAA. Topologically, residues 25–110 are cytoplasmic; sequence TVDGLLWLLY…TFDMTIKIAR (86 aa). A coiled-coil region spans residues 75–100; sequence AKLRRRHDKALEAYEAKNNELTQSKS. A helical transmembrane segment spans residues 111–131; sequence WAATSGLMLFLQFWYSKTPIF. Residues 132-155 are Lumenal-facing; it reads TLPPGWIPWQVQWVLSFPRAPMGT. Residues 156–172 form a helical membrane-spanning segment; that stretch reads VSIQIWGGACATVVALV. Topologically, residues 173-206 are cytoplasmic; sequence GDAMKASLAYVSKPKIDRIKLGATMEGKEGKKRQ.

Belongs to the WRB/GET1 family. As to quaternary structure, interacts with GET3.

Its subcellular location is the endoplasmic reticulum membrane. Functionally, required for the post-translational delivery of tail-anchored (TA) proteins to the endoplasmic reticulum. Acts as a membrane receptor for soluble GET3, which recognizes and selectively binds the transmembrane domain of TA proteins in the cytosol. In Ajellomyces capsulatus (strain G186AR / H82 / ATCC MYA-2454 / RMSCC 2432) (Darling's disease fungus), this protein is Protein GET1.